The sequence spans 542 residues: MSARIGRLRGLCLRHVSSTRQTSPIQRRSLNQFISRVQQHDQPALEQRQFRLAVKDNIATVSPNSEEETPLTTTCGSNFLANYRSPFEATIVSQLRSRGALLVGKTNLDEFGMGSHSVHTAFGAVAQEGEHEQQAVKHSAGGSSGGSAVAVATGEADIALGTDTGGSVRLPAGYTGVVGFKPSYGMLSRYGVVPYANSLDTVGLLAKEVRPIAELILGGADKVTRGLWAEHDPLDPTSLSHGARRRCASQRDCYTGPLPKDPYPLKNLKFGLPLEYNITELSPSIRHSWSAAAAKLQSLGARLVPVSLPSTRHALSAYYVIAPAEASSNLAKYDGIRYGTRFTSPTESDAAISEGPEGREEEEEGILYARARTAGFGDEVKRRILLGAYTLSSAAMDNYFLKAQKVRRLVRRDFNRVFALPNPLLDKPERFELSELPETVGLEDKWGPTEVDFLLCPTAPTTAPRLDEVLSEEEKDPVSAYMNDVFTVPASLAGLPAISVPMRVEDKEGAGMAGLQLIGQYWDDARLLAVAETVADVVREEL.

Residues Lys55 and Ser143 each act as charge relay system in the active site. Ser167 serves as the catalytic Acyl-ester intermediate.

It belongs to the amidase family. GatA subfamily. As to quaternary structure, subunit of the heterotrimeric GatCAB amidotransferase (AdT) complex, composed of A, B and C subunits.

It is found in the mitochondrion. The enzyme catalyses L-glutamyl-tRNA(Gln) + L-glutamine + ATP + H2O = L-glutaminyl-tRNA(Gln) + L-glutamate + ADP + phosphate + H(+). Its function is as follows. Allows the formation of correctly charged Gln-tRNA(Gln) through the transamidation of misacylated Glu-tRNA(Gln) in the mitochondria. The reaction takes place in the presence of glutamine and ATP through an activated gamma-phospho-Glu-tRNA(Gln). The polypeptide is Glutamyl-tRNA(Gln) amidotransferase subunit A, mitochondrial (Neurospora crassa (strain ATCC 24698 / 74-OR23-1A / CBS 708.71 / DSM 1257 / FGSC 987)).